The sequence spans 156 residues: Endoribonuclease YbeY (156 aa).

Positions 117, 121, and 127 each coordinate Zn(2+).

This sequence belongs to the endoribonuclease YbeY family. It depends on Zn(2+) as a cofactor.

Its subcellular location is the cytoplasm. In terms of biological role, single strand-specific metallo-endoribonuclease involved in late-stage 70S ribosome quality control and in maturation of the 3' terminus of the 16S rRNA. This is Endoribonuclease YbeY from Shewanella frigidimarina (strain NCIMB 400).